The primary structure comprises 1129 residues: Inositol hexakisphosphate and diphosphoinositol-pentakisphosphate kinase 2 (1129 aa).

A Phosphoserine modification is found at serine 44. 59-60 is a substrate binding site; the sequence is KK. ATP contacts are provided by arginine 140, lysine 193, histidine 200, and arginine 219. 219–220 lines the substrate pocket; the sequence is RK. The residue at position 229 (serine 229) is a Phosphoserine. ATP-binding positions include 243-246 and 252-254; these read EEFM and DVK. Residues lysine 254 and arginine 268 each coordinate substrate. Residues serine 270, aspartate 315, and 327–329 each bind ATP; that span reads DVN. 332-335 is a substrate binding site; it reads SFVK. Residues 377–448 form a polyphosphoinositide-binding domain region; the sequence is PTTSGTMMEL…VLDIARQLLM (72 aa). The tract at residues 904–945 is disordered; that stretch reads KGCEEDKNLPSGYGYRPASRENEGRRSLKTDDDEPHTSKRDE. Positions 921–945 are enriched in basic and acidic residues; that stretch reads ASRENEGRRSLKTDDDEPHTSKRDE. A phosphoserine mark is found at serine 1051, serine 1058, and serine 1066. The interval 1070 to 1129 is disordered; it reads YTPTKILPTPPAALKSSKASSKAAAGGPSQAMAPHTSSRKKSINSKTEGHEPKKSTGKKR. Over residues 1081–1098 the composition is skewed to low complexity; it reads AALKSSKASSKAAAGGPS. A phosphoserine mark is found at serine 1106 and serine 1107.

It belongs to the histidine acid phosphatase family. VIP1 subfamily. Ubiquitously expressed. Expressed in the cochlear and vestibular sensory hair cells, supporting cells and spiral ganglion neurons.

The protein localises to the cytoplasm. It localises to the cytosol. The catalysed reaction is 1D-myo-inositol hexakisphosphate + ATP = 1-diphospho-1D-myo-inositol 2,3,4,5,6-pentakisphosphate + ADP. The enzyme catalyses 5-diphospho-1D-myo-inositol 1,2,3,4,6-pentakisphosphate + ATP + H(+) = 1,5-bis(diphospho)-1D-myo-inositol 2,3,4,6-tetrakisphosphate + ADP. In terms of biological role, bifunctional inositol kinase that acts in concert with the IP6K kinases IP6K1, IP6K2 and IP6K3 to synthesize the diphosphate group-containing inositol pyrophosphates diphosphoinositol pentakisphosphate, PP-InsP5, and bis-diphosphoinositol tetrakisphosphate, (PP)2-InsP4. PP-InsP5 and (PP)2-InsP4, also respectively called InsP7 and InsP8, regulate a variety of cellular processes, including apoptosis, vesicle trafficking, cytoskeletal dynamics, exocytosis, insulin signaling and neutrophil activation. Phosphorylates inositol hexakisphosphate (InsP6) at position 1 to produce PP-InsP5 which is in turn phosphorylated by IP6Ks to produce (PP)2-InsP4. Alternatively, phosphorylates PP-InsP5 at position 1, produced by IP6Ks from InsP6, to produce (PP)2-InsP4. Required for normal hearing. The chain is Inositol hexakisphosphate and diphosphoinositol-pentakisphosphate kinase 2 from Mus musculus (Mouse).